The sequence spans 434 residues: Nicotinate phosphoribosyltransferase (434 aa).

The residue at position 242 (His242) is a Phosphohistidine; by autocatalysis.

This sequence belongs to the NAPRTase family. Post-translationally, transiently phosphorylated on a His residue during the reaction cycle. Phosphorylation strongly increases the affinity for substrates and increases the rate of nicotinate D-ribonucleotide production. Dephosphorylation regenerates the low-affinity form of the enzyme, leading to product release.

It carries out the reaction nicotinate + 5-phospho-alpha-D-ribose 1-diphosphate + ATP + H2O = nicotinate beta-D-ribonucleotide + ADP + phosphate + diphosphate. It functions in the pathway cofactor biosynthesis; NAD(+) biosynthesis; nicotinate D-ribonucleotide from nicotinate: step 1/1. Catalyzes the synthesis of beta-nicotinate D-ribonucleotide from nicotinate and 5-phospho-D-ribose 1-phosphate at the expense of ATP. The polypeptide is Nicotinate phosphoribosyltransferase (Sinorhizobium medicae (strain WSM419) (Ensifer medicae)).